Reading from the N-terminus, the 270-residue chain is MVWFRCMRYGEAAIVLSAVLMGTVSVFVRNVGGDTLSVTFLRLFFGFLAVLPFCLRDVGRPDRTLLGLAVFNFLTVASYIAAIQSTEVAMAALLLYMAPVYVIPLSVLMGERVEVKTLLALPLGLIGLYLMLTPYAELTFGIIFGIVSGLSYAIVFVLSKEARKKHSPWRITFYNLGLGSAALLPYFLMFGRVGSWLWAIGLGVVPTAVPFVLFSYGMKYVKVQRAPILALIEPLCAGLVGYFYFGETLTLTQLIGGAMILAGVLIAWRE.

The next 10 membrane-spanning stretches (helical) occupy residues 12–32 (AAIVLSAVLMGTVSVFVRNVG), 35–55 (TLSVTFLRLFFGFLAVLPFCL), 64–84 (TLLGLAVFNFLTVASYIAAIQ), 88–108 (VAMAALLLYMAPVYVIPLSVL), 117–137 (TLLALPLGLIGLYLMLTPYAE), 138–158 (LTFGIIFGIVSGLSYAIVFVL), 171–191 (ITFYNLGLGSAALLPYFLMFG), 194–214 (GSWLWAIGLGVVPTAVPFVLF), 226–246 (APILALIEPLCAGLVGYFYFG), and 248–268 (TLTLTQLIGGAMILAGVLIAW). 2 consecutive EamA domains span residues 19–133 (VLMG…LMLT) and 150–269 (LSYA…IAWR).

It belongs to the EamA transporter family.

Its subcellular location is the cell membrane. This is an uncharacterized protein from Archaeoglobus fulgidus (strain ATCC 49558 / DSM 4304 / JCM 9628 / NBRC 100126 / VC-16).